Here is a 484-residue protein sequence, read N- to C-terminus: PTS system N-acetylmuramic acid-specific EIIBC component (484 aa).

A PTS EIIB type-1 domain is found at 1–89; that stretch reads MAKITTSMIQ…NEMMEGEEDN (89 aa). The Phosphocysteine intermediate; for EIIB activity role is filled by Cys28. The tract at residues 83-106 is disordered; the sequence is MEGEEDNSASTTAESRDLKDVASE. Residues 96–106 show a composition bias toward basic and acidic residues; it reads ESRDLKDVASE. The PTS EIIC type-1 domain maps to 124 to 484; the sequence is SKFATIFTPL…FFGTKNVDLS (361 aa). 10 consecutive transmembrane segments (helical) span residues 126-146, 168-188, 194-214, 232-252, 273-293, 312-332, 345-365, 379-399, 404-424, and 451-471; these read FATI…LLGF, LILY…ILIG, AFGG…LGYN, GIDP…GAGV, TLLI…GVLF, ILAG…FVPV, LFPI…ALYA, GSII…VTLP, FITA…VSYM, and IFAG…AGFL.

The protein localises to the cell inner membrane. The catalysed reaction is N-acetyl-beta-D-muramate(out) + N(pros)-phospho-L-histidyl-[protein] = N-acetyl-beta-D-muramate 6-phosphate(in) + L-histidyl-[protein]. Functionally, the phosphoenolpyruvate-dependent sugar phosphotransferase system (sugar PTS), a major carbohydrate active transport system, catalyzes the phosphorylation of incoming sugar substrates concomitantly with their translocation across the cell membrane. This system is involved in N-acetylmuramic acid (MurNAc) transport, yielding cytoplasmic MurNAc-6-P. Is also able to take up anhydro-N-acetylmuramic acid (anhMurNAc), but cannot phosphorylate the carbon 6, probably because of the 1,6-anhydro ring. This Aliivibrio fischeri (strain ATCC 700601 / ES114) (Vibrio fischeri) protein is PTS system N-acetylmuramic acid-specific EIIBC component (murP).